The chain runs to 348 residues: D-alanine--D-alanine ligase (348 aa).

Positions 132–334 constitute an ATP-grasp domain; it reads KRVLESAGIP…YAELIEELVR (203 aa). Residue 162-217 coordinates ATP; that stretch reads EAVLSYPVFVKPANMGSSVGISKAESEEELRAAILLALTYDSRILIEQGVLAREIE. Mg(2+)-binding residues include Asp288, Glu301, and Asn303.

It belongs to the D-alanine--D-alanine ligase family. The cofactor is Mg(2+). It depends on Mn(2+) as a cofactor.

It localises to the cytoplasm. The enzyme catalyses 2 D-alanine + ATP = D-alanyl-D-alanine + ADP + phosphate + H(+). The protein operates within cell wall biogenesis; peptidoglycan biosynthesis. Cell wall formation. The polypeptide is D-alanine--D-alanine ligase (Streptococcus equi subsp. equi (strain 4047)).